The primary structure comprises 150 residues: Pyruvoyl-dependent arginine decarboxylase (150 aa).

A Pyruvic acid (Ser) modification is found at serine 42.

This sequence belongs to the PdaD family. The cofactor is pyruvate.

It carries out the reaction L-arginine + H(+) = agmatine + CO2. The polypeptide is Pyruvoyl-dependent arginine decarboxylase (Methanopyrus kandleri (strain AV19 / DSM 6324 / JCM 9639 / NBRC 100938)).